The following is a 154-amino-acid chain: Ascorbate-specific PTS system EIIA component (154 aa).

The 145-residue stretch at 6–150 folds into the PTS EIIA type-2 domain; it reads SLAENKSIRL…QEVLDLIDRT (145 aa). The active-site Tele-phosphohistidine intermediate is histidine 68. Histidine 68 bears the Phosphohistidine mark.

It localises to the cytoplasm. The phosphoenolpyruvate-dependent sugar phosphotransferase system (sugar PTS), a major carbohydrate active transport system, catalyzes the phosphorylation of incoming sugar substrates concomitantly with their translocation across the cell membrane. The enzyme II UlaABC PTS system is involved in ascorbate transport. This is Ascorbate-specific PTS system EIIA component (ulaC) from Shigella flexneri.